Here is a 225-residue protein sequence, read N- to C-terminus: Cobalt transport protein CbiM (225 aa).

Helical transmembrane passes span 7-27, 43-63, 76-96, 108-128, 143-163, and 175-195; these read VLPL…VAIA, PFVG…VPVP, LAAV…ALLI, TLGA…YFAF, FLAG…ALAL, and FTGV…LEGV.

This sequence belongs to the CbiM family. As to quaternary structure, forms an energy-coupling factor (ECF) transporter complex composed of an ATP-binding protein (A component, CbiO), a transmembrane protein (T component, CbiQ) and 2 possible substrate-capture proteins (S components, CbiM and CbiN) of unknown stoichimetry.

It localises to the cell inner membrane. It participates in cofactor biosynthesis; adenosylcobalamin biosynthesis. Functionally, part of the energy-coupling factor (ECF) transporter complex CbiMNOQ involved in cobalt import. The protein is Cobalt transport protein CbiM of Sorangium cellulosum (strain So ce56) (Polyangium cellulosum (strain So ce56)).